We begin with the raw amino-acid sequence, 137 residues long: Large ribosomal subunit protein uL16 (137 aa).

This sequence belongs to the universal ribosomal protein uL16 family. Part of the 50S ribosomal subunit.

Its function is as follows. Binds 23S rRNA and is also seen to make contacts with the A and possibly P site tRNAs. The protein is Large ribosomal subunit protein uL16 of Acinetobacter baumannii (strain AB307-0294).